A 672-amino-acid polypeptide reads, in one-letter code: MSPSSSDRLGYPFSTFLDQHSAQLNASAVPPELWHSLYRKLSDQTFDAGDHFQIICEMDENDEKKTLFVRALEDMHNNDEENIFLIDHFISFPAESARKCVESNEKLPERLAALFGIDDDDCSSDGDETVEKIETSCEKEEEEHARRLSEPGLPRHESVDARLSSYSVDDPKKTMTERVMRNLWKFAQTYTVSYQLENGEMEKKHVWYVMDDFGSRIRHSGCPNVRIVPLMFLPQNCAYSIMFLTKPVKIDDEITMDWAANVITAKNPEWRQYLEMPWAEKDFSSESMVPGPPTLEYFTSGRNPDFLADEKDKKTCESAIFSALSVLKKQGKIKIFLQIFADDTQLTEHLKSRQIEYVDDWKAADVIWMIKHFHDYSNLAQENPCAQINQFPFESCITVKDLLAACAMRDPSKNDWYQLTYNLNTQLPEFVARFQNRQKNGEHNVWIVKPWNLARGMEMAVTDDLNQIIRMVETGPKIVCEYIARPLLFPRPDNGNKVKFDLRYIVFVNAIGPVTAYVYNRFWIRFAINQFQLGAYDDLETHFTVFNYLDKEKVLQMKCEKFVEIIEKTYPKLKWTQIQADINSTIRKAIEVAASEPSPRGVAPNTQSRAMYGVDIMLQESPESPDVIKPTLLEINFMPDTTRACQYYPDFADTVFDTMFLDEIDPTKVTPI.

The region spanning 332-670 is the TTL domain; sequence KIKIFLQIFA…LDEIDPTKVT (339 aa). Residues 480–483, Lys-499, and Asp-501 each bind ATP; that span reads CEYI.

It belongs to the tubulin--tyrosine ligase family.

Its function is as follows. Regulates microtubule dynamics in uterine muscle cells. The polypeptide is Tubulin--tyrosine ligase-like protein 12 (Caenorhabditis briggsae).